Consider the following 354-residue polypeptide: MSLESVRYSRGSLQVLNQLLLPHKSEYEPVTGVQQGADAIRTMKVRGAPAIAIVGVLSLAVELTTKPCQDVPSLITFVRESLHHLVSARPTAVNMKKAADELNAFLAEEADKPGATSQRLTESVVQWAESLLKKDVEDNQMIGDFGAKHILEKAGPTEKVCMLTHCNTGSLATAGYGTALGVVRSLHALGRLSHVFCTETRPYNQGSRLTAYELVYEKIPATLITDSMASVTMRERKVTAVVVGADRVVANGDTANKIGTYQLAIIAKYHGIPFYVAAPSTSCDLSLPTGGSIVIEERPSHELTDINGIRIAAPGIDVWNPAFDVTPHELITGIITERGVFKPEELKDGLTKGQ.

Aspartate 246 acts as the Proton donor in catalysis.

This sequence belongs to the eIF-2B alpha/beta/delta subunits family. MtnA subfamily.

The protein resides in the cytoplasm. The protein localises to the nucleus. It catalyses the reaction 5-(methylsulfanyl)-alpha-D-ribose 1-phosphate = 5-(methylsulfanyl)-D-ribulose 1-phosphate. Its pathway is amino-acid biosynthesis; L-methionine biosynthesis via salvage pathway; L-methionine from S-methyl-5-thio-alpha-D-ribose 1-phosphate: step 1/6. Functionally, catalyzes the interconversion of methylthioribose-1-phosphate (MTR-1-P) into methylthioribulose-1-phosphate (MTRu-1-P). The polypeptide is Methylthioribose-1-phosphate isomerase (mri1) (Xenopus laevis (African clawed frog)).